Consider the following 100-residue polypeptide: Small ribosomal subunit protein uS14c (100 aa).

It belongs to the universal ribosomal protein uS14 family. Part of the 30S ribosomal subunit.

It localises to the plastid. Functionally, binds 16S rRNA, required for the assembly of 30S particles. In Cuscuta gronovii (Common dodder), this protein is Small ribosomal subunit protein uS14c (rps14).